The primary structure comprises 2271 residues: Serine-rich adhesin for platelets (2271 aa).

Positions 1-89 are cleaved as a signal peptide; the sequence is MSKRQKAFHD…VNMLHDQQAF (89 aa). A serine-rich repeat region 1, SRR1 region spans residues 90-230; that stretch reads AASDAPLTSE…KTSTTSTSTA (141 aa). Polar residues predominate over residues 100–111; sequence LNTQSETVGNQN. Disordered stretches follow at residues 100–229, 751–791, and 806–2243; these read LNTQ…STST, NSMS…VVST, and SVSA…GLLG. A compositionally biased stretch (low complexity) spans 112–128; sequence STTIEASTSTADSTSVT. Positions 129-140 are enriched in polar residues; that stretch reads KNSSSVQTSNSD. Residues 150 to 229 show a composition bias toward low complexity; sequence VTSTTNSTSN…NKTSTTSTST (80 aa). Positions 231-751 are non-repeat region (NRR); the sequence is PVKLRTFSRL…TTFKYEVTRN (521 aa). Composition is skewed to low complexity over residues 752–791, 806–1392, and 1402–2214; these read SMSD…VVST, SVSA…LSLS, and SNSA…ATSE. The segment at 752 to 2232 is serine-rich repeat region 2, SRR2; sequence SMSDSVSTSG…AQSEKRLPDT (1481 aa). Positions 2229–2233 match the LPXTG sorting signal motif; sequence LPDTG. A Pentaglycyl murein peptidoglycan amidated threonine modification is found at Thr-2232. The propeptide at 2233 to 2271 is removed by sortase; sequence GDSIKQNGLLGGVMTLLVGLGLMKRKKKKDENDQDDSQA.

Belongs to the serine-rich repeat protein (SRRP) family. In terms of processing, proteolytically cleaved by a metalloprotease. Glycosylated. It is probable that most of the Ser residues in SSR1 and SSR2 are O-GlcNAcylated. Sequential glycosylation by sugar transferases are able to generate complex sugar polymorphisms.

It localises to the secreted. Its subcellular location is the cell wall. Its function is as follows. Mediates binding to human platelets, possibly through a receptor-ligand interaction. Probably associated with virulence in endovascular infection. The sequence is that of Serine-rich adhesin for platelets (sraP) from Staphylococcus aureus (strain Mu50 / ATCC 700699).